Here is a 291-residue protein sequence, read N- to C-terminus: UPF0276 protein VV3194 (291 aa).

This sequence belongs to the UPF0276 family.

The polypeptide is UPF0276 protein VV3194 (Vibrio vulnificus (strain YJ016)).